Reading from the N-terminus, the 1245-residue chain is ABC transporter B family member 13 (1245 aa).

Residues 1-14 show a composition bias toward polar residues; it reads MDNTERSSNGNIQA. The interval 1–20 is disordered; that stretch reads MDNTERSSNGNIQAETEAKE. In terms of domain architecture, ABC transmembrane type-1 1 spans 47 to 336; sequence MLLGGLGACI…AAPSLSAIAK (290 aa). A helical membrane pass occupies residues 48 to 68; it reads LLGGLGACIHGATLPLFFVFF. Asn-77 carries an N-linked (GlcNAc...) asparagine glycan. The next 5 helical transmembrane spans lie at 94–114, 171–191, 195–215, 276–296, and 314–334; these read LYLV…VSCW, HVLR…LSVW, LLTL…AIVM, LGVG…LWYA, and ILNV…LSAI. N-linked (GlcNAc...) asparagine glycosylation is found at Asn-351 and Asn-391. Residues 372–607 form the ABC transporter 1 domain; that stretch reads IEFQKVSFAY…GGDYATLVNC (236 aa). 406–413 contributes to the ATP binding site; sequence GPSGSGKS. The span at 610–629 shows a compositional bias: polar residues; that stretch reads TEPQENSRSIMSETCKSQAG. Residues 610–660 are disordered; that stretch reads TEPQENSRSIMSETCKSQAGSSSSRRVSSSRRTSSFRVDQEKTKNDDSKKD. Positions 630–646 are enriched in low complexity; that stretch reads SSSSRRVSSSRRTSSFR. Over residues 647 to 660 the composition is skewed to basic and acidic residues; that stretch reads VDQEKTKNDDSKKD. An ABC transmembrane type-1 2 domain is found at 681–969; the sequence is ALLGSIGAVL…TLALTPDIVK (289 aa). Transmembrane regions (helical) follow at residues 686 to 706 and 725 to 745; these read IGAV…AYVL and AIIF…QHYF. Asn-778 is a glycosylation site (N-linked (GlcNAc...) asparagine). 4 consecutive transmembrane segments (helical) span residues 805 to 822, 828 to 848, 913 to 933, and 947 to 967; these read IVQN…AFFY, AVVT…QLFL, LSQF…SVLI, and FMVL…TPDI. Residues 1004-1240 enclose the ABC transporter 2 domain; it reads IEFRNVSFVY…PNGFYKQLTS (237 aa). N-linked (GlcNAc...) asparagine glycosylation is present at Asn-1008. ATP is bound at residue 1039-1046; that stretch reads GPSGSGKS. The N-linked (GlcNAc...) asparagine glycan is linked to Asn-1106.

This sequence belongs to the ABC transporter superfamily. ABCB family. Multidrug resistance exporter (TC 3.A.1.201) subfamily.

It localises to the membrane. The protein is ABC transporter B family member 13 (ABCB13) of Arabidopsis thaliana (Mouse-ear cress).